Consider the following 492-residue polypeptide: MPSTNPFLTLPYEPAFASLGSEFSDPVEAATFPAHQLRFRNDRLLPILGLDPATVADEHFIEAFGRFQGRSPLLAMRYHGYQFGIYSPDLGDGRGFLYGQVRGRNGWLYDFGTKGSGRTPYSRGGDGKPTLKGGVREVLASEFLQRLGVRTGRCLSLIETGEELWRGDEPSPTRSSVMVRFNRTHIRFGTFERLHYFKRADLVRQLLDHVIATYYSHLLGDPEADAKFYAELTERTADLAAQWMAAGFCHAVLNTDNLSIVGESFDYGPWAFLDRFDPKFTAAYFDHSGRYRYENQPGICQLNLELLQVPLGMVMSAADLEAGIAGFGDRYQATYSRLMLRRLGFEADQLHSAIADDLIITTLQLLLRAPIGYNEFFARLRAQFQPSWRSDLSAILPDWITTDLEALPEAQWQGWRDRYHQLLTHLPESQLPLIQQQLAQANPEISPIRPVVESVWDPIAIDDNWEPLEALLNRWRHDGDGAADGAVVPNAN.

Residues Gly-91, Gly-93, Arg-94, Lys-114, Asp-126, Gly-127, Arg-180, and Arg-187 each contribute to the ATP site. Asp-256 acts as the Proton acceptor in catalysis. Asn-257 and Asp-266 together coordinate Mg(2+). Asp-266 is a binding site for ATP.

Belongs to the SELO family. The cofactor is Mg(2+). Requires Mn(2+) as cofactor.

The enzyme catalyses L-seryl-[protein] + ATP = 3-O-(5'-adenylyl)-L-seryl-[protein] + diphosphate. It carries out the reaction L-threonyl-[protein] + ATP = 3-O-(5'-adenylyl)-L-threonyl-[protein] + diphosphate. It catalyses the reaction L-tyrosyl-[protein] + ATP = O-(5'-adenylyl)-L-tyrosyl-[protein] + diphosphate. The catalysed reaction is L-histidyl-[protein] + UTP = N(tele)-(5'-uridylyl)-L-histidyl-[protein] + diphosphate. The enzyme catalyses L-seryl-[protein] + UTP = O-(5'-uridylyl)-L-seryl-[protein] + diphosphate. It carries out the reaction L-tyrosyl-[protein] + UTP = O-(5'-uridylyl)-L-tyrosyl-[protein] + diphosphate. Nucleotidyltransferase involved in the post-translational modification of proteins. It can catalyze the addition of adenosine monophosphate (AMP) or uridine monophosphate (UMP) to a protein, resulting in modifications known as AMPylation and UMPylation. The protein is Protein nucleotidyltransferase YdiU of Synechococcus sp. (strain ATCC 27144 / PCC 6301 / SAUG 1402/1) (Anacystis nidulans).